The chain runs to 256 residues: Transmembrane protein 187 (256 aa).

The next 7 membrane-spanning stretches (helical) occupy residues 8–28 (ALFH…TGIF), 51–71 (FLAM…GVYW), 94–112 (VFAG…RIGM), 119–139 (VLDQ…CLCL), 146–168 (WLFL…HPHG), 193–213 (NISS…FVVL), and 233–253 (FWSK…LTSL).

It is found in the membrane. This is Transmembrane protein 187 (TMEM187) from Bos taurus (Bovine).